The primary structure comprises 612 residues: MDLEKLKDYQKHIRNFAIVAHIDHGKSTIADRILELTDTVSQRQLKNQMLDDMPLERQRGITIKMNSVEVKYHARDGEDYIFHLIDTPGHVDFSYEVSRSLAACEGALMVVDASQGVQAQTLANTYVAIDDDLEILPVINKIDLPSADIPKTKEEIEEMLGLDASEAAEVSGKTGQGIEDMLEKVVKDIPAPSGDITAPLKALIFDSKYDDYRGVVMSVKIEDGVVKPGDRIKIMNTGKEYEVTEVGVSSPHPVKKDLLIAGDVGYITANIKSVRETRVGDTITDATNPTEEPLEGYRQIPPMVYSGMYPVDNRDYDDLKEALQKLQLNDAALEFEPETSTALGFGFRCGFLGLLHMDVVQERLEQEFDLGLIMTAPSVDYHAIMNDGSTKVIDNPSDLPDAGEYQEVQEPYVKAEIMVLNDFVGPVMELCQRKRGEFVTMDYLDKYRVNVIYNMPLAEIIFDFFDDLKSSTKGYASLDYEITGYRSTDLVKIDILLNKEPIDALSFIAHRSEAQDRARQMTSMLKKLIPRQNFEVDIQGAIGAKIISRATIKPYRKDVTWKIHTGDPDRRAKLLEKQKRGKKRMKAVGRVEVPQDAFMAVLKMHDDDIKGK.

The 183-residue stretch at 11–193 folds into the tr-type G domain; it reads KHIRNFAIVA…KVVKDIPAPS (183 aa). Residues 23–28 and 140–143 each bind GTP; these read DHGKST and NKID.

Belongs to the TRAFAC class translation factor GTPase superfamily. Classic translation factor GTPase family. LepA subfamily.

The protein localises to the cell membrane. The enzyme catalyses GTP + H2O = GDP + phosphate + H(+). Functionally, required for accurate and efficient protein synthesis under certain stress conditions. May act as a fidelity factor of the translation reaction, by catalyzing a one-codon backward translocation of tRNAs on improperly translocated ribosomes. Back-translocation proceeds from a post-translocation (POST) complex to a pre-translocation (PRE) complex, thus giving elongation factor G a second chance to translocate the tRNAs correctly. Binds to ribosomes in a GTP-dependent manner. The polypeptide is Elongation factor 4 (Lactobacillus helveticus (strain DPC 4571)).